The sequence spans 72 residues: Protein kish-A (72 aa).

Residues 1–26 (MSAIFNFQSLLTVILLLICTCAYIRS) form the signal peptide. At 27–53 (LAPSILDRNKTGLLGIFWKCARIGERK) the chain is on the extracellular side. Residue Asn-35 is glycosylated (N-linked (GlcNAc...) asparagine). Residues 54–71 (SPYVAICCIVMAFSILFI) traverse the membrane as a helical segment. Position 72 (Gln-72) is a topological domain, cytoplasmic.

The protein belongs to the KISH family.

The protein localises to the golgi apparatus membrane. Involved in the early part of the secretory pathway. In Mus musculus (Mouse), this protein is Protein kish-A (Tmem167a).